The sequence spans 388 residues: Chorismate synthase (388 aa).

The NADP(+) site is built by R39 and R45. Residues 130 to 132 (RSS), 251 to 252 (NA), G296, 311 to 315 (KPIPT), and R337 each bind FMN.

It belongs to the chorismate synthase family. Homotetramer. FMNH2 is required as a cofactor.

It carries out the reaction 5-O-(1-carboxyvinyl)-3-phosphoshikimate = chorismate + phosphate. It participates in metabolic intermediate biosynthesis; chorismate biosynthesis; chorismate from D-erythrose 4-phosphate and phosphoenolpyruvate: step 7/7. In terms of biological role, catalyzes the anti-1,4-elimination of the C-3 phosphate and the C-6 proR hydrogen from 5-enolpyruvylshikimate-3-phosphate (EPSP) to yield chorismate, which is the branch point compound that serves as the starting substrate for the three terminal pathways of aromatic amino acid biosynthesis. This reaction introduces a second double bond into the aromatic ring system. This Lactococcus lactis subsp. cremoris (strain MG1363) protein is Chorismate synthase.